We begin with the raw amino-acid sequence, 520 residues long: Alkyl hydroperoxide reductase subunit F (520 aa).

213–228 (DVLVVGGGPAGAAAAI) contributes to the FAD binding site. A disulfide bridge links Cys-343 with Cys-346. 355-369 (RVAVIGGGNSGVEAA) lines the NAD(+) pocket. 476-486 (TSIPGVFAAGD) lines the FAD pocket.

This sequence belongs to the class-II pyridine nucleotide-disulfide oxidoreductase family. As to quaternary structure, homodimer. The cofactor is FAD.

Serves to protect the cell against DNA damage by alkyl hydroperoxides. It can use either NADH or NADPH as electron donor for direct reduction of redox dyes or of alkyl hydroperoxides when combined with the AhpC protein. This Pseudomonas putida (Arthrobacter siderocapsulatus) protein is Alkyl hydroperoxide reductase subunit F (ahpF).